Consider the following 496-residue polypeptide: Tyrosine-protein kinase Srms (496 aa).

One can recognise an SH3 domain in the interval 55 to 116 (PRARLFRALY…PVTYLAKATP (62 aa)). An SH2 domain is found at 124-216 (WYFSGISRAQ…LIQNPLLQPC (93 aa)). Positions 234-495 (FVLRRKLGEG…AINRRLHLGL (262 aa)) constitute a Protein kinase domain. Residues 240–248 (LGEGFFGEV) and Lys-262 each bind ATP. The active-site Proton acceptor is the Asp-354. Tyr-384 is subject to Phosphotyrosine; by autocatalysis.

Belongs to the protein kinase superfamily. Tyr protein kinase family. SRC subfamily. In terms of assembly, interacts (via the SH2 and SH3 domains) with DOK1. Interacts with KHDRBS1/SAM68 and VIM. Higher expression in liver, lung, thymus and skin than in brain, kidney, heart and spleen. In skin, highly expressed in keratinocytes. Abundant in lung, liver, spleen, kidney and testis and is also detected in the cerebrum.

Its subcellular location is the cytoplasm. The enzyme catalyses L-tyrosyl-[protein] + ATP = O-phospho-L-tyrosyl-[protein] + ADP + H(+). Its function is as follows. Non-receptor tyrosine-protein kinase which phosphorylates DOK1 on tyrosine residues. Also phosphorylates KHDRBS1/SAM68 and VIM on tyrosine residues. Phosphorylation of KHDRBS1 is EGF-dependent. Phosphorylates OTUB1, promoting deubiquitination of RPTOR. The chain is Tyrosine-protein kinase Srms (Srms) from Mus musculus (Mouse).